The chain runs to 1251 residues: DNA repair protein REV1 (1251 aa).

The 88-residue stretch at 44-131 folds into the BRCT domain; the sequence is TSSTIFSGVA…RLLSYIPYQL (88 aa). 2 disordered regions span residues 206-236 and 282-342; these read TSPG…NGAL and STRN…VPSK. Polar residues predominate over residues 282 to 320; that stretch reads STRNTDALRNPHRTNSFSLSPLHSNTKINGAHHSTVQGP. Residues 321-342 are compositionally biased toward low complexity; the sequence is SSTKSTSSVSTFSKAAPSVPSK. Residues 352–362 are interaction with target DNA; the sequence is FYSHSRLHHIS. DCTP contacts are provided by residues Arg357, 423 to 427, 510 to 516, Asn522, and Asp570; these read DMDCF and SCSYEAR. Positions 419–653 constitute a UmuC domain; that stretch reads IMHVDMDCFF…QLVTNLPGVG (235 aa). Asp423 is a binding site for Mg(2+). The Mg(2+) site is built by Asp570 and Glu571. 2 interaction with target DNA regions span residues 653–656 and 709–717; these read GHSM and RKSVSAEIN. 2 disordered regions span residues 1035 to 1096 and 1119 to 1147; these read AYDQ…KLLN and HEGP…LQSD. The span at 1043–1056 shows a compositional bias: polar residues; the sequence is GENSTHQQSASASV. The segment covering 1070-1079 has biased composition (basic residues); that stretch reads EKKRNKKKKT. The Nuclear localization signal motif lies at 1071–1078; that stretch reads KKRNKKKK. A compositionally biased stretch (basic and acidic residues) spans 1119–1129; the sequence is HEGPPAEKPLE. Polar residues predominate over residues 1132–1146; that stretch reads SASTSGVPGLSSLQS. A protein interaction domain; mediates interaction with DNA polymerase zeta region spans residues 1150-1249; that stretch reads GCVRPPAPNL…LQQTYGSTLK (100 aa).

It belongs to the DNA polymerase type-Y family. Monomer. Interacts with the DNA polymerase zeta which is composed of REV3L and MAD2L2; the interaction with MAD2L2 is direct and requires that REV3L is in its closed conformation. Interacts with POLH, POLI and POLK. May bind ITGA3. Interacts with FAAP20/C1orf86. As to expression, ubiquitous.

It is found in the nucleus. Functionally, deoxycytidyl transferase involved in DNA repair. Transfers a dCMP residue from dCTP to the 3'-end of a DNA primer in a template-dependent reaction. May assist in the first step in the bypass of abasic lesions by the insertion of a nucleotide opposite the lesion. Required for normal induction of mutations by physical and chemical agents. The sequence is that of DNA repair protein REV1 (REV1) from Homo sapiens (Human).